Reading from the N-terminus, the 525-residue chain is Adenosine deaminase AGSA (525 aa).

A signal peptide spans 1–25 (MSSFSTHNFVAIATFVCWFCCLATA). A glycan (N-linked (GlcNAc...) asparagine) is linked at Asn-81. Residues His-117 and His-119 each coordinate Zn(2+). Asp-120 is a binding site for substrate. Asn-132 is a glycosylation site (N-linked (GlcNAc...) asparagine). Residues Cys-142 and Cys-163 are joined by a disulfide bond. A glycan (N-linked (GlcNAc...) asparagine) is linked at Asn-188. Substrate-binding positions include 207-214 (WVRFNKYF) and Gly-329. A glycan (N-linked (GlcNAc...) asparagine) is linked at Asn-334. Zn(2+) is bound at residue His-361. The active-site Proton donor is Glu-364. His-389 functions as the Proton acceptor in the catalytic mechanism. Asp-446 contacts Zn(2+). Asp-447 lines the substrate pocket.

It belongs to the metallo-dependent hydrolases superfamily. Adenosine and AMP deaminases family. ADGF subfamily. Requires Zn(2+) as cofactor. As to expression, detected in egg cordons and in the developing central nervous system. Not detected in adult central nervous system (at protein level). Atrial gland.

Its subcellular location is the secreted. It catalyses the reaction adenosine + H2O + H(+) = inosine + NH4(+). Adenosine deaminase that may contribute to the degradation of extracellular adenosine, a signaling molecule that controls a variety of cellular responses. May play a role in the regulation of cell proliferation. In Aplysia californica (California sea hare), this protein is Adenosine deaminase AGSA.